We begin with the raw amino-acid sequence, 437 residues long: Glutamyl-tRNA reductase (437 aa).

Residues 49 to 52 (TCNR), S109, 114 to 116 (EGQ), and Q120 contribute to the substrate site. C50 acts as the Nucleophile in catalysis. Position 198–203 (198–203 (GAGRMS)) interacts with NADP(+).

The protein belongs to the glutamyl-tRNA reductase family. In terms of assembly, homodimer.

It carries out the reaction (S)-4-amino-5-oxopentanoate + tRNA(Glu) + NADP(+) = L-glutamyl-tRNA(Glu) + NADPH + H(+). The protein operates within porphyrin-containing compound metabolism; protoporphyrin-IX biosynthesis; 5-aminolevulinate from L-glutamyl-tRNA(Glu): step 1/2. It participates in porphyrin-containing compound metabolism; chlorophyll biosynthesis. Its function is as follows. Catalyzes the NADPH-dependent reduction of glutamyl-tRNA(Glu) to glutamate 1-semialdehyde (GSA). The polypeptide is Glutamyl-tRNA reductase (Synechococcus sp. (strain CC9311)).